Here is a 122-residue protein sequence, read N- to C-terminus: S-adenosylmethionine decarboxylase proenzyme (122 aa).

Serine 61 (schiff-base intermediate with substrate; via pyruvic acid) is an active-site residue. Serine 61 carries the pyruvic acid (Ser); by autocatalysis modification. Histidine 66 (proton acceptor; for processing activity) is an active-site residue. Residue cysteine 81 is the Proton donor; for catalytic activity of the active site.

This sequence belongs to the prokaryotic AdoMetDC family. Type 1 subfamily. Heterotetramer of two alpha and two beta chains arranged as a dimer of alpha/beta heterodimers. Pyruvate is required as a cofactor. In terms of processing, is synthesized initially as an inactive proenzyme. Formation of the active enzyme involves a self-maturation process in which the active site pyruvoyl group is generated from an internal serine residue via an autocatalytic post-translational modification. Two non-identical subunits are generated from the proenzyme in this reaction, and the pyruvate is formed at the N-terminus of the alpha chain, which is derived from the carboxyl end of the proenzyme. The post-translation cleavage follows an unusual pathway, termed non-hydrolytic serinolysis, in which the side chain hydroxyl group of the serine supplies its oxygen atom to form the C-terminus of the beta chain, while the remainder of the serine residue undergoes an oxidative deamination to produce ammonia and the pyruvoyl group blocking the N-terminus of the alpha chain.

It carries out the reaction S-adenosyl-L-methionine + H(+) = S-adenosyl 3-(methylsulfanyl)propylamine + CO2. The protein operates within amine and polyamine biosynthesis; S-adenosylmethioninamine biosynthesis; S-adenosylmethioninamine from S-adenosyl-L-methionine: step 1/1. Its function is as follows. Catalyzes the decarboxylation of S-adenosylmethionine to S-adenosylmethioninamine (dcAdoMet), the propylamine donor required for the synthesis of the polyamines spermine and spermidine from the diamine putrescine. This is S-adenosylmethionine decarboxylase proenzyme from Prochlorococcus marinus (strain MIT 9211).